We begin with the raw amino-acid sequence, 85 residues long: Cytochrome c oxidase assembly factor 3, mitochondrial (85 aa).

Over methionine 1–proline 26 the chain is Mitochondrial matrix. A helical transmembrane segment spans residues phenylalanine 27–threonine 49. The Mitochondrial intermembrane segment spans residues tyrosine 50–alanine 85.

This sequence belongs to the COA3 family. Component of 250-400 kDa complexes called cytochrome oxidase assembly intermediates or COA complexes composed at least COA3, COX14, COX5A, SHY1 and SSC1. Interacts with COX1 and MSS51.

It localises to the mitochondrion inner membrane. Required for assembly of cytochrome c oxidase (complex IV). With COX14, negatively regulates COX1 translation and is involved in MSS51 association with newly synthesized COX1. The polypeptide is Cytochrome c oxidase assembly factor 3, mitochondrial (COA3) (Saccharomyces cerevisiae (strain RM11-1a) (Baker's yeast)).